The sequence spans 106 residues: Large ribosomal subunit protein uL24 (106 aa).

The protein belongs to the universal ribosomal protein uL24 family. Part of the 50S ribosomal subunit.

Its function is as follows. One of two assembly initiator proteins, it binds directly to the 5'-end of the 23S rRNA, where it nucleates assembly of the 50S subunit. Functionally, one of the proteins that surrounds the polypeptide exit tunnel on the outside of the subunit. In Acidithiobacillus ferrooxidans (strain ATCC 53993 / BNL-5-31) (Leptospirillum ferrooxidans (ATCC 53993)), this protein is Large ribosomal subunit protein uL24.